Reading from the N-terminus, the 399-residue chain is Tryptophan synthase beta chain (399 aa).

An N6-(pyridoxal phosphate)lysine modification is found at lysine 92.

This sequence belongs to the TrpB family. As to quaternary structure, tetramer of two alpha and two beta chains. The cofactor is pyridoxal 5'-phosphate.

The enzyme catalyses (1S,2R)-1-C-(indol-3-yl)glycerol 3-phosphate + L-serine = D-glyceraldehyde 3-phosphate + L-tryptophan + H2O. The protein operates within amino-acid biosynthesis; L-tryptophan biosynthesis; L-tryptophan from chorismate: step 5/5. The beta subunit is responsible for the synthesis of L-tryptophan from indole and L-serine. The protein is Tryptophan synthase beta chain of Bordetella pertussis (strain Tohama I / ATCC BAA-589 / NCTC 13251).